The chain runs to 704 residues: MPNLLLELRSEEIPARMQRKAAGDLKKLVTDALVEAGLSYEGAREYWTPRRLALDIHGLTARSADVREERKGPRTDANEKAIEGFLRGAGLSSVSEAQVVSDPKKGDFYVAVISKPGRATEEIVTDVMPGIIRDFPWPKSMRWGKASSKPGALRWVRPLQSIVCTFGPEHEETTVIPFEIDGITASNITYGHRFHAPEPITVRRFDDYAANLEKAKVILDAERRKDIILHDARDIAFANGLELVEDEGLLEEVSGLVEWPQVLMGSFEEDYLSIPSEIIRLTIKTNQKCFVTRPQGGETLSNKFILVSNIQASDGGKEIVHGNGKVVRARLSDALHFWKRDQGNLPDLETLTASAAKFGLDINKPLDQRMAKLDALDVTFHAKLGTQGARVARIRTLAKQLADITGADAALIDRAAVLAKADLRTEAVGEFPELQGLMGRKYAALQGEDASVAAALEDHYKPQGPSDRVPEDRVAITIALADKLDTLIGFWAIDEKPTGSKDPFALRRAALGVVRILLERKVRLPLLTTTRDIDLLSFFHDRLKVYLRDQGARHDLIDAVLTPDADDLLMVARRVEALTAFITSEDGKNLLAGTKRATQLLAAEEKKGTVIADGVSQALLKLDAEKELFAAISGASKDASDAVAGEDFRSAMEALSKLRGPVDRFFEDVLVNDEDAAIRANRLALLRLIREATGTVADFSKISG.

Belongs to the class-II aminoacyl-tRNA synthetase family. As to quaternary structure, tetramer of two alpha and two beta subunits.

It localises to the cytoplasm. The catalysed reaction is tRNA(Gly) + glycine + ATP = glycyl-tRNA(Gly) + AMP + diphosphate. The sequence is that of Glycine--tRNA ligase beta subunit from Rhizobium johnstonii (strain DSM 114642 / LMG 32736 / 3841) (Rhizobium leguminosarum bv. viciae).